The primary structure comprises 143 residues: Small ribosomal subunit protein uS12 (143 aa).

Positions 1–20 are enriched in basic residues; it reads MGKPRGLRTARKHRSHRRDQ. Residues 1–26 form a disordered region; sequence MGKPRGLRTARKHRSHRRDQRWHDKD. Proline 62 is modified (hydroxyproline).

This sequence belongs to the universal ribosomal protein uS12 family. In terms of assembly, component of the 40S small ribosomal subunit.

The protein resides in the cytoplasm. Its subcellular location is the cytosol. It localises to the rough endoplasmic reticulum. This Dermacentor variabilis (American dog tick) protein is Small ribosomal subunit protein uS12 (RpS23).